We begin with the raw amino-acid sequence, 737 residues long: Polyribonucleotide nucleotidyltransferase (737 aa).

Positions 489 and 495 each coordinate Mg(2+). Positions 556-615 (PKIDTIKIDVDKIKIVIGKGGETIDKIIAETGVKIDIDEEGNVSIYSSDQDAINRAKEII) constitute a KH domain. Residues 625–693 (DEVYRAKVVR…EKGRVDASMK (69 aa)) form the S1 motif domain. Residues 691–737 (SMKALLPRPPKPERDEKGEKSERPYRPRHHKDHKPKKEITETPKDSE) are disordered. Basic and acidic residues-rich tracts occupy residues 700 to 715 (PKPERDEKGEKSERPY) and 725 to 737 (PKKEITETPKDSE).

It belongs to the polyribonucleotide nucleotidyltransferase family. It depends on Mg(2+) as a cofactor.

Its subcellular location is the cytoplasm. It carries out the reaction RNA(n+1) + phosphate = RNA(n) + a ribonucleoside 5'-diphosphate. In terms of biological role, involved in mRNA degradation. Catalyzes the phosphorolysis of single-stranded polyribonucleotides processively in the 3'- to 5'-direction. The polypeptide is Polyribonucleotide nucleotidyltransferase (Streptococcus pneumoniae (strain Hungary19A-6)).